Reading from the N-terminus, the 391-residue chain is Probable sugar efflux transporter (391 aa).

12 helical membrane passes run 16–36 (VFVFSLSAFIFNTTEFVPVAL), 51–71 (VGLMITAYAWVVSLGSLPLML), 82–102 (LLFLFALFILSHILSALAWNF), 110–130 (MGIAFAHSIFWSITASLVIRV), 138–158 (QALGLLALGSSLAMILGLPLG), 170–190 (TFGVIGGVATLIALLMWKLLP), 210–230 (PLLMGIYLLVIMVISGHFTTY), 247–267 (ITTLMLFVFGLAGVVGSFLFG), 277–297 (FIAFAMVLVICPQLLLFVFKN), 300–320 (WVVFLQIFLWGIGITSLGISL), 338–358 (IYSGSYNVGIGSGALFGSIVI), and 361–381 (LGLGYIGFVGGALGLLALFWL).

It belongs to the major facilitator superfamily. SotB (TC 2.A.1.2) family.

The protein localises to the cell inner membrane. Functionally, involved in the efflux of sugars. The physiological role may be the reduction of the intracellular concentration of toxic sugars or sugar metabolites. The sequence is that of Probable sugar efflux transporter from Helicobacter pylori (strain ATCC 700392 / 26695) (Campylobacter pylori).